Consider the following 250-residue polypeptide: MKTTRTEAIILNTRDHGESDRLVGLYTRSGGRLQGIAKGARRSRKRFANTLEPCSLVELQFREKGTLVWLESCKLLEPFLSLRTELIRWGIAALISEIVIEMVPEGDPQPELFELLKETLRQLCEDKDSLNVALLFIFRFQDKMGYLPALENCGICGRSLRSATKWCWQVDRGLLACPDHPVERVRALELDLGTLLLIRQCRSLSLDRIWRLRFLHDTKVQLFYGLLDWVRGHIRKELKSLKLLQQAHST.

The protein belongs to the RecO family.

Its function is as follows. Involved in DNA repair and RecF pathway recombination. This is DNA repair protein RecO from Syntrophobacter fumaroxidans (strain DSM 10017 / MPOB).